The sequence spans 208 residues: MVEWIEIQYPIEYSEAYKMMKSRLTGILNGTASEAVFILEHQDVYTAGISAKNDELLNCYDIPVHHTDRGGKFTYHGPGQIIIYPVINLAANGRVKDIRNYVNNLASLVINSLKFFNIIGITVQDTIGVWIDSEFGRKKIASIGVRIHKWITYHGVAINVCPDLKKFKGIIPCGDRDTIVTSINELLDQKIDLDYYKAILKQEFYKIF.

The region spanning 30-208 (GTASEAVFIL…ILKQEFYKIF (179 aa)) is the BPL/LPL catalytic domain. Substrate-binding positions include 69–76 (RGGKFTYH), 142–144 (SIG), and 155–157 (GVA). Residue Cys173 is the Acyl-thioester intermediate of the active site.

It belongs to the LipB family.

The protein resides in the cytoplasm. It carries out the reaction octanoyl-[ACP] + L-lysyl-[protein] = N(6)-octanoyl-L-lysyl-[protein] + holo-[ACP] + H(+). It participates in protein modification; protein lipoylation via endogenous pathway; protein N(6)-(lipoyl)lysine from octanoyl-[acyl-carrier-protein]: step 1/2. Catalyzes the transfer of endogenously produced octanoic acid from octanoyl-acyl-carrier-protein onto the lipoyl domains of lipoate-dependent enzymes. Lipoyl-ACP can also act as a substrate although octanoyl-ACP is likely to be the physiological substrate. This chain is Octanoyltransferase, found in Orientia tsutsugamushi (strain Boryong) (Rickettsia tsutsugamushi).